A 300-amino-acid polypeptide reads, in one-letter code: Nicotinate-nucleotide pyrophosphorylase [carboxylating] (300 aa).

The tract at residues 5-9 is important for hexamer formation; it reads QLLPK. Quinolinate contacts are provided by residues arginine 107, 150 to 151, 172 to 173, lysine 183, glutamate 213, aspartate 234, 260 to 262, and glycine 282; these read RK, HR, and SGG.

The protein belongs to the NadC/ModD family. Hexamer formed by 3 homodimers.

It catalyses the reaction nicotinate beta-D-ribonucleotide + CO2 + diphosphate = quinolinate + 5-phospho-alpha-D-ribose 1-diphosphate + 2 H(+). It functions in the pathway cofactor biosynthesis; NAD(+) biosynthesis; nicotinate D-ribonucleotide from quinolinate: step 1/1. Involved in the catabolism of quinolinic acid (QA). The polypeptide is Nicotinate-nucleotide pyrophosphorylase [carboxylating] (qprt) (Dictyostelium discoideum (Social amoeba)).